We begin with the raw amino-acid sequence, 247 residues long: Type III pantothenate kinase (247 aa).

7–14 lines the ATP pocket; sequence AIGNSRWH. Residues Y91 and 95-98 contribute to the substrate site; that span reads GLDR. D97 functions as the Proton acceptor in the catalytic mechanism. K(+) is bound at residue D117. T120 contacts ATP. T172 serves as a coordination point for substrate.

This sequence belongs to the type III pantothenate kinase family. Homodimer. Requires NH4(+) as cofactor. K(+) serves as cofactor.

It localises to the cytoplasm. The enzyme catalyses (R)-pantothenate + ATP = (R)-4'-phosphopantothenate + ADP + H(+). The protein operates within cofactor biosynthesis; coenzyme A biosynthesis; CoA from (R)-pantothenate: step 1/5. Catalyzes the phosphorylation of pantothenate (Pan), the first step in CoA biosynthesis. This chain is Type III pantothenate kinase, found in Synechococcus elongatus (strain ATCC 33912 / PCC 7942 / FACHB-805) (Anacystis nidulans R2).